We begin with the raw amino-acid sequence, 122 residues long: Histone H2B, gonadal (122 aa).

Residues 1–31 (MPPKVSSKGAKKAGKAKAARSGDKKRKRRRK) are disordered. The segment covering 9–31 (GAKKAGKAKAARSGDKKRKRRRK) has biased composition (basic residues). The O-linked (GlcNAc) serine glycan is linked to serine 109. Residue lysine 117 forms a Glycyl lysine isopeptide (Lys-Gly) (interchain with G-Cter in ubiquitin) linkage.

The protein belongs to the histone H2B family. As to quaternary structure, the nucleosome is a histone octamer containing two molecules each of H2A, H2B, H3 and H4 assembled in one H3-H4 heterotetramer and two H2A-H2B heterodimers. The octamer wraps approximately 147 bp of DNA. Monoubiquitination of Lys-117 gives a specific tag for epigenetic transcriptional activation and is also prerequisite for histone H3 'Lys-4' and 'Lys-79' methylation. In terms of processing, glcNAcylation at Ser-109 promotes monoubiquitination of Lys-117. It fluctuates in response to extracellular glucose, and associates with transcribed genes.

The protein localises to the nucleus. The protein resides in the chromosome. Functionally, core component of nucleosome. Nucleosomes wrap and compact DNA into chromatin, limiting DNA accessibility to the cellular machineries which require DNA as a template. Histones thereby play a central role in transcription regulation, DNA repair, DNA replication and chromosomal stability. DNA accessibility is regulated via a complex set of post-translational modifications of histones, also called histone code, and nucleosome remodeling. This is Histone H2B, gonadal from Patella granatina (Sandpaper limpet).